Here is a 167-residue protein sequence, read N- to C-terminus: uncharacterized protein (167 aa).

This is an uncharacterized protein from Sus scrofa (Pig).